We begin with the raw amino-acid sequence, 124 residues long: Putative RNA polymerase II transcriptional coactivator (124 aa).

The segment at 1–61 is disordered; it reads MSSSSSSEDE…GRLKDSDGNE (61 aa). 2 stretches are compositionally biased toward basic and acidic residues: residues 11-21 and 39-58; these read LEKKVTKEQKK and QEVK…KDSD.

This sequence belongs to the transcriptional coactivator PC4 family.

It localises to the nucleus. General coactivator that functions cooperatively with TAFs and mediates functional interactions between upstream activators and the general transcriptional machinery. Binds single-stranded DNA. The protein is Putative RNA polymerase II transcriptional coactivator of Caenorhabditis elegans.